The following is a 157-amino-acid chain: Ribosomal RNA large subunit methyltransferase H (157 aa).

Residues Leu73, Gly104, and 123–128 each bind S-adenosyl-L-methionine; that span reads LGPLTL.

It belongs to the RNA methyltransferase RlmH family. Homodimer.

It is found in the cytoplasm. It catalyses the reaction pseudouridine(1915) in 23S rRNA + S-adenosyl-L-methionine = N(3)-methylpseudouridine(1915) in 23S rRNA + S-adenosyl-L-homocysteine + H(+). Specifically methylates the pseudouridine at position 1915 (m3Psi1915) in 23S rRNA. The polypeptide is Ribosomal RNA large subunit methyltransferase H (Xylella fastidiosa (strain M12)).